The chain runs to 123 residues: MAFDKDAFLTALDSMTVMELNDLVKAIEEKFGVSAAAMSAPAAGGAVAAVAEEKTEFNVVLLEAGAAKVSVIKAVREITGLGLKEAKDMVDGAPKNVKEGVSKVDAEAALKKLLDAGAKAELK.

It belongs to the bacterial ribosomal protein bL12 family. Homodimer. Part of the ribosomal stalk of the 50S ribosomal subunit. Forms a multimeric L10(L12)X complex, where L10 forms an elongated spine to which 2 to 4 L12 dimers bind in a sequential fashion. Binds GTP-bound translation factors.

Forms part of the ribosomal stalk which helps the ribosome interact with GTP-bound translation factors. Is thus essential for accurate translation. The sequence is that of Large ribosomal subunit protein bL12 from Albidiferax ferrireducens (strain ATCC BAA-621 / DSM 15236 / T118) (Rhodoferax ferrireducens).